A 296-amino-acid polypeptide reads, in one-letter code: uncharacterized protein (296 aa).

Residues 7–26 form a helical membrane-spanning segment; that stretch reads CFSLVCALGASTYLLWRGWL.

It is found in the membrane. This is an uncharacterized protein from Treponema pallidum (strain Nichols).